A 1017-amino-acid polypeptide reads, in one-letter code: Dopamine dehydroxylase (1017 aa).

A signal peptide (tat-type signal) is located at residues 1–34 (MGNLTMSRRTFVKTAAITGAAAAAFGASTHTALA). One can recognise a 4Fe-4S Mo/W bis-MGD-type domain in the interval 45-103 (DTVAVKTCCRGCGKMECGVKVIVQNGRAIRVEGDEGAFQSMGNCCTKSQSSIQAAYHPD). Residues Cys53, Cys56, Cys61, and Cys89 each contribute to the [4Fe-4S] cluster site. Catalysis depends on Lys91, which acts as the Electron donor/acceptor.

It belongs to the prokaryotic molybdopterin-containing oxidoreductase family. [4Fe-4S] cluster is required as a cofactor. Mo-bis(molybdopterin guanine dinucleotide) serves as cofactor. Predicted to be exported by the Tat system. The position of the signal peptide cleavage has not been experimentally proven.

It carries out the reaction dopamine + AH2 = 3-tyramine + A + H2O. Functionally, involved in drug metabolism, as part of an interspecies gut bacterial pathway for Levodopa (L-dopa) metabolism, acting on dopamine produced by Enterecoccus L-dopa decarboxylase. Removes the para hydroxyl group of dopamine to produce m-tyramine (3-tyramine). It is possible that dopamine dehydroxylation influences the multiple side effects of L-dopa administration linked to dopamine production in the treatment of Parkinson's disease. The polypeptide is Dopamine dehydroxylase (Eggerthella lenta (Eubacterium lentum)).